We begin with the raw amino-acid sequence, 1267 residues long: Probable ATP-dependent RNA helicase DHR1 (1267 aa).

3 disordered regions span residues 1–67 (MGTY…EPLT), 168–233 (YEPK…SNIK), and 255–313 (EELK…DQND). 2 stretches are compositionally biased toward basic and acidic residues: residues 7-25 (RFNE…ELKR) and 32-43 (TRQDENDERVEN). Residues 175–192 (EYGEGGSSEDDDGEDDFE) are compositionally biased toward acidic residues. Residue S181 is modified to Phosphoserine. Residues 202 to 217 (TDNEEKKSSGFIDHRP) are compositionally biased toward basic and acidic residues. Over residues 264-284 (DEMDFDTTSEDDDEEEDQEEE) the composition is skewed to acidic residues. Positions 401–580 (MEAIHHNDVV…KTLFPIAPPV (180 aa)) constitute a Helicase ATP-binding domain. ATP is bound at residue 414–421 (GETGSGKT). The DEAH box motif lies at 516–519 (DEAH). Residues 675-858 (DIDFSVQVID…SIVLQMKSMA (184 aa)) form the Helicase C-terminal domain. Disordered regions lie at residues 693-720 (RYEE…EVLT) and 955-976 (PNPD…PGMD). Over residues 695-719 (EEDEGNSGNGEDEEDEEEEGFEEVL) the composition is skewed to acidic residues.

This sequence belongs to the DEAD box helicase family. DEAH subfamily. In terms of assembly, interacts with snoRNA U3. Component of the ribosomal small subunit (SSU) processome composed of at least 40 protein subunits and snoRNA U3.

It is found in the nucleus. It localises to the nucleolus. The enzyme catalyses ATP + H2O = ADP + phosphate + H(+). Functionally, probable ATP-binding RNA helicase. Required for 18S rRNA synthesis. May play a role in restructuring of the pre-rRNA. The sequence is that of Probable ATP-dependent RNA helicase DHR1 (ECM16) from Saccharomyces cerevisiae (strain ATCC 204508 / S288c) (Baker's yeast).